A 473-amino-acid chain; its full sequence is 3-isopropylmalate dehydratase large subunit (473 aa).

Residues cysteine 351, cysteine 414, and cysteine 417 each contribute to the [4Fe-4S] cluster site.

This sequence belongs to the aconitase/IPM isomerase family. LeuC type 1 subfamily. Heterodimer of LeuC and LeuD. It depends on [4Fe-4S] cluster as a cofactor.

It catalyses the reaction (2R,3S)-3-isopropylmalate = (2S)-2-isopropylmalate. It functions in the pathway amino-acid biosynthesis; L-leucine biosynthesis; L-leucine from 3-methyl-2-oxobutanoate: step 2/4. Its function is as follows. Catalyzes the isomerization between 2-isopropylmalate and 3-isopropylmalate, via the formation of 2-isopropylmaleate. This Acidovorax ebreus (strain TPSY) (Diaphorobacter sp. (strain TPSY)) protein is 3-isopropylmalate dehydratase large subunit.